The sequence spans 115 residues: Hydrogenase maturation factor HypA (115 aa).

Ni(2+) is bound at residue histidine 2. Zn(2+)-binding residues include cysteine 73, cysteine 76, cysteine 89, and cysteine 92.

It belongs to the HypA/HybF family.

Its function is as follows. Involved in the maturation of [NiFe] hydrogenases. Required for nickel insertion into the metal center of the hydrogenase. The sequence is that of Hydrogenase maturation factor HypA from Nitrosospira multiformis (strain ATCC 25196 / NCIMB 11849 / C 71).